We begin with the raw amino-acid sequence, 175 residues long: ATP synthase subunit b (175 aa).

Residues 14–34 (LNPNPGLIFWTALTFLIVLVI) form a helical membrane-spanning segment.

This sequence belongs to the ATPase B chain family. As to quaternary structure, F-type ATPases have 2 components, F(1) - the catalytic core - and F(0) - the membrane proton channel. F(1) has five subunits: alpha(3), beta(3), gamma(1), delta(1), epsilon(1). F(0) has four main subunits: a(1), b(2) and c(10-14). The alpha and beta chains form an alternating ring which encloses part of the gamma chain. F(1) is attached to F(0) by a central stalk formed by the gamma and epsilon chains, while a peripheral stalk is formed by the delta and b chains.

Its subcellular location is the cell inner membrane. Functionally, f(1)F(0) ATP synthase produces ATP from ADP in the presence of a proton or sodium gradient. F-type ATPases consist of two structural domains, F(1) containing the extramembraneous catalytic core and F(0) containing the membrane proton channel, linked together by a central stalk and a peripheral stalk. During catalysis, ATP synthesis in the catalytic domain of F(1) is coupled via a rotary mechanism of the central stalk subunits to proton translocation. In terms of biological role, component of the F(0) channel, it forms part of the peripheral stalk, linking F(1) to F(0). The protein is ATP synthase subunit b of Chlorobaculum tepidum (strain ATCC 49652 / DSM 12025 / NBRC 103806 / TLS) (Chlorobium tepidum).